A 247-amino-acid polypeptide reads, in one-letter code: 2,3-bisphosphoglycerate-dependent phosphoglycerate mutase (247 aa).

Substrate-binding positions include Arg-8 to Asn-15, Thr-21 to Gly-22, Arg-60, Glu-87 to Tyr-90, Lys-98, Arg-114 to Arg-115, and Gly-183 to Asn-184. His-9 functions as the Tele-phosphohistidine intermediate in the catalytic mechanism. The Proton donor/acceptor role is filled by Glu-87.

This sequence belongs to the phosphoglycerate mutase family. BPG-dependent PGAM subfamily. Homodimer.

It catalyses the reaction (2R)-2-phosphoglycerate = (2R)-3-phosphoglycerate. It participates in carbohydrate degradation; glycolysis; pyruvate from D-glyceraldehyde 3-phosphate: step 3/5. Its function is as follows. Catalyzes the interconversion of 2-phosphoglycerate and 3-phosphoglycerate. The sequence is that of 2,3-bisphosphoglycerate-dependent phosphoglycerate mutase from Methylibium petroleiphilum (strain ATCC BAA-1232 / LMG 22953 / PM1).